Consider the following 60-residue polypeptide: Large ribosomal subunit protein uL30 (60 aa).

The protein belongs to the universal ribosomal protein uL30 family. Part of the 50S ribosomal subunit.

The chain is Large ribosomal subunit protein uL30 from Shewanella loihica (strain ATCC BAA-1088 / PV-4).